The primary structure comprises 339 residues: UDP-N-acetylenolpyruvoylglucosamine reductase (339 aa).

Positions 18–189 (GVEVKAKWFA…LRVRFALNRV (172 aa)) constitute an FAD-binding PCMH-type domain. Arg166 is a catalytic residue. Ser239 functions as the Proton donor in the catalytic mechanism. Glu335 is an active-site residue.

It belongs to the MurB family. FAD serves as cofactor.

The protein resides in the cytoplasm. It carries out the reaction UDP-N-acetyl-alpha-D-muramate + NADP(+) = UDP-N-acetyl-3-O-(1-carboxyvinyl)-alpha-D-glucosamine + NADPH + H(+). It functions in the pathway cell wall biogenesis; peptidoglycan biosynthesis. Functionally, cell wall formation. The protein is UDP-N-acetylenolpyruvoylglucosamine reductase of Pseudomonas fluorescens (strain ATCC BAA-477 / NRRL B-23932 / Pf-5).